Reading from the N-terminus, the 134-residue chain is UPF0412 protein YaaI (134 aa).

Residues 1–23 (MKSVFTLSASLAISLMLCCTAQA) form the signal peptide.

It belongs to the UPF0412 family.

The protein is UPF0412 protein YaaI of Escherichia coli O17:K52:H18 (strain UMN026 / ExPEC).